Consider the following 124-residue polypeptide: U33-theraphotoxin-Cg1c (124 aa).

The first 17 residues, 1-17 (MKFAVAIAFTLLVCVFA), serve as a signal peptide directing secretion. 5 cysteine pairs are disulfide-bonded: Cys-26/Cys-37, Cys-31/Cys-51, Cys-36/Cys-75, Cys-61/Cys-83, and Cys-77/Cys-94. A compositionally biased stretch (basic and acidic residues) spans 93–108 (RCQEESGKSDKSKESQ). The tract at residues 93–124 (RCQEESGKSDKSKESQGSDESEESEESKESSG) is disordered. Acidic residues predominate over residues 109–118 (GSDESEESEE).

The protein belongs to the neurotoxin 32 family. Expressed by the venom gland.

The protein localises to the secreted. In Chilobrachys guangxiensis (Chinese earth tiger tarantula), this protein is U33-theraphotoxin-Cg1c.